The following is a 136-amino-acid chain: Histone H3-7 (136 aa).

The tract at residues 1–43 (MARTKQTARKSTGGKAPRKQLATKAARKSAPATGGVKKPHRYR) is disordered. Arginine 3 carries the asymmetric dimethylarginine modification. Arginine 3 is modified (citrulline; alternate). Position 4 is a phosphothreonine (threonine 4). Lysine 5 bears the Allysine; alternate mark. Lysine 5 is modified (N6,N6,N6-trimethyllysine; alternate). Lysine 5 carries the post-translational modification N6,N6-dimethyllysine; alternate. Lysine 5 bears the N6-(2-hydroxyisobutyryl)lysine; alternate mark. Lysine 5 carries the post-translational modification N6-(beta-hydroxybutyryl)lysine; alternate. Lysine 5 is subject to N6-acetyllysine; alternate. An N6-methyllysine; alternate modification is found at lysine 5. Glutamine 6 carries the 5-glutamyl dopamine; alternate modification. 5-glutamyl serotonin; alternate is present on glutamine 6. Threonine 7 bears the Phosphothreonine mark. The residue at position 9 (arginine 9) is a Citrulline; alternate. Position 9 is a symmetric dimethylarginine (arginine 9). Lysine 10 carries the N6,N6,N6-trimethyllysine; alternate modification. Lysine 10 bears the N6,N6-dimethyllysine; alternate mark. Lysine 10 is subject to N6-(2-hydroxyisobutyryl)lysine; alternate. Lysine 10 carries the N6-(beta-hydroxybutyryl)lysine; alternate modification. N6-acetyllysine; alternate is present on lysine 10. Lysine 10 is subject to N6-methyllysine; alternate. At lysine 10 the chain carries N6-lactoyllysine; alternate. The residue at position 11 (serine 11) is an ADP-ribosylserine; alternate. Residue serine 11 is modified to Phosphoserine; alternate. The residue at position 12 (threonine 12) is a Phosphothreonine. N6-(2-hydroxyisobutyryl)lysine; alternate is present on lysine 15. Lysine 15 carries the N6-(beta-hydroxybutyryl)lysine; alternate modification. Lysine 15 is subject to N6-acetyllysine; alternate. N6-lactoyllysine; alternate is present on lysine 15. Lysine 15 is modified (N6-glutaryllysine; alternate). N6-succinyllysine; alternate is present on lysine 15. At arginine 18 the chain carries Asymmetric dimethylarginine. The residue at position 18 (arginine 18) is a Citrulline; alternate. Residues lysine 19 and lysine 24 each carry the N6-(2-hydroxyisobutyryl)lysine; alternate modification. N6-(beta-hydroxybutyryl)lysine; alternate occurs at positions 19 and 24. 2 positions are modified to N6-acetyllysine; alternate: lysine 19 and lysine 24. N6-methyllysine; alternate occurs at positions 19 and 24. N6-lactoyllysine; alternate is present on residues lysine 19 and lysine 24. Residues lysine 19 and lysine 24 each carry the N6-glutaryllysine; alternate modification. 2 positions are modified to N6-butyryllysine; alternate: lysine 19 and lysine 24. Arginine 27 carries the citrulline modification. An N6,N6,N6-trimethyllysine; alternate modification is found at lysine 28. Lysine 28 is modified (N6,N6-dimethyllysine; alternate). Lysine 28 carries the post-translational modification N6-(2-hydroxyisobutyryl)lysine; alternate. N6-acetyllysine; alternate is present on lysine 28. Residue lysine 28 is modified to N6-methyllysine; alternate. Residue lysine 28 is modified to N6-lactoyllysine; alternate. The residue at position 28 (lysine 28) is an N6-glutaryllysine; alternate. Position 29 is an ADP-ribosylserine; alternate (serine 29). Serine 29 carries the phosphoserine; alternate modification. Lysine 37 is modified (N6,N6,N6-trimethyllysine; alternate). Lysine 37 carries the post-translational modification N6,N6-dimethyllysine; alternate. Lysine 37 bears the N6-(2-hydroxyisobutyryl)lysine; alternate mark. Lysine 37 carries the N6-acetyllysine; alternate modification. Lysine 37 carries the N6-methyllysine; alternate modification. Lysine 38 carries the post-translational modification N6-methyllysine. Tyrosine 42 bears the Phosphotyrosine mark. Lysine 57 is modified (N6,N6,N6-trimethyllysine; alternate). Lysine 57 bears the N6-(2-hydroxyisobutyryl)lysine; alternate mark. An N6-(beta-hydroxybutyryl)lysine; alternate modification is found at lysine 57. The residue at position 57 (lysine 57) is an N6-acetyllysine; alternate. N6-lactoyllysine; alternate is present on lysine 57. Residue lysine 57 is modified to N6-glutaryllysine; alternate. The residue at position 57 (lysine 57) is an N6-succinyllysine; alternate. Position 57 is an N6-methyllysine (lysine 57). Serine 58 is modified (phosphoserine). N6-(2-hydroxyisobutyryl)lysine; alternate occurs at positions 65 and 80. N6-methyllysine; alternate is present on residues lysine 65 and lysine 80. Lysine 80 is subject to N6,N6,N6-trimethyllysine; alternate. The residue at position 80 (lysine 80) is an N6,N6-dimethyllysine; alternate. At lysine 80 the chain carries N6-acetyllysine; alternate. Lysine 80 bears the N6-lactoyllysine; alternate mark. Lysine 80 is modified (N6-glutaryllysine; alternate). Position 80 is an N6-succinyllysine; alternate (lysine 80). Position 81 is a phosphothreonine (threonine 81). Residue serine 87 is modified to Phosphoserine. The residue at position 108 (threonine 108) is a Phosphothreonine. Lysine 116 and lysine 123 each carry N6-acetyllysine; alternate. N6-glutaryllysine; alternate occurs at positions 116 and 123. Lysine 123 is subject to N6-(2-hydroxyisobutyryl)lysine; alternate. The residue at position 123 (lysine 123) is an N6-methyllysine; alternate. Position 123 is an N6-succinyllysine; alternate (lysine 123).

The protein belongs to the histone H3 family. In terms of assembly, the nucleosome is a histone octamer containing two molecules each of H2A, H2B, H3 and H4 assembled in one H3-H4 heterotetramer and two H2A-H2B heterodimers. The octamer wraps approximately 147 bp of DNA. During nucleosome assembly the chaperone ASF1A interacts with the histone H3-H4 heterodimer. In terms of processing, acetylation is generally linked to gene activation. Acetylation on Lys-10 (H3K9ac) impairs methylation at Arg-9 (H3R8me2s). Acetylation on Lys-19 (H3K18ac) and Lys-24 (H3K24ac) favors methylation at Arg-18 (H3R17me). Acetylation at Lys-123 (H3K122ac) by EP300/p300 plays a central role in chromatin structure: localizes at the surface of the histone octamer and stimulates transcription, possibly by promoting nucleosome instability. Post-translationally, citrullination at Arg-9 (H3R8ci) and/or Arg-18 (H3R17ci) by PADI4 impairs methylation and represses transcription. Asymmetric dimethylation at Arg-18 (H3R17me2a) by CARM1 is linked to gene activation. Symmetric dimethylation at Arg-9 (H3R8me2s) by PRMT5 is linked to gene repression. Asymmetric dimethylation at Arg-3 (H3R2me2a) by PRMT6 is linked to gene repression and is mutually exclusive with H3 Lys-5 methylation (H3K4me2 and H3K4me3). H3R2me2a is present at the 3' of genes regardless of their transcription state and is enriched on inactive promoters, while it is absent on active promoters. In terms of processing, methylation at Lys-5 (H3K4me), Lys-37 (H3K36me) and Lys-80 (H3K79me) are linked to gene activation. Methylation at Lys-5 (H3K4me) facilitates subsequent acetylation of H3 and H4. Methylation at Lys-80 (H3K79me) is associated with DNA double-strand break (DSB) responses and is a specific target for TP53BP1. Methylation at Lys-10 (H3K9me) and Lys-28 (H3K27me) are linked to gene repression. Methylation at Lys-10 (H3K9me) is a specific target for HP1 proteins (CBX1, CBX3 and CBX5) and prevents subsequent phosphorylation at Ser-11 (H3S10ph) and acetylation of H3 and H4. Methylation at Lys-5 (H3K4me) and Lys-80 (H3K79me) require preliminary monoubiquitination of H2B at 'Lys-120'. Methylation at Lys-10 (H3K9me) and Lys-28 (H3K27me) are enriched in inactive X chromosome chromatin. Monomethylation at Lys-57 (H3K56me1) by EHMT2/G9A in G1 phase promotes interaction with PCNA and is required for DNA replication. Post-translationally, phosphorylated at Thr-4 (H3T3ph) by HASPIN during prophase and dephosphorylated during anaphase. Phosphorylation at Ser-11 (H3S10ph) by AURKB is crucial for chromosome condensation and cell-cycle progression during mitosis and meiosis. In addition phosphorylation at Ser-11 (H3S10ph) by RPS6KA4 and RPS6KA5 is important during interphase because it enables the transcription of genes following external stimulation, like mitogens, stress, growth factors or UV irradiation and result in the activation of genes, such as c-fos and c-jun. Phosphorylation at Ser-11 (H3S10ph), which is linked to gene activation, prevents methylation at Lys-10 (H3K9me) but facilitates acetylation of H3 and H4. Phosphorylation at Ser-11 (H3S10ph) by AURKB mediates the dissociation of HP1 proteins (CBX1, CBX3 and CBX5) from heterochromatin. Phosphorylation at Ser-11 (H3S10ph) is also an essential regulatory mechanism for neoplastic cell transformation. Phosphorylated at Ser-29 (H3S28ph) by MAP3K20 isoform 1, RPS6KA5 or AURKB during mitosis or upon ultraviolet B irradiation. Phosphorylation at Thr-7 (H3T6ph) by PRKCB is a specific tag for epigenetic transcriptional activation that prevents demethylation of Lys-5 (H3K4me) by LSD1/KDM1A. At centromeres, specifically phosphorylated at Thr-12 (H3T11ph) from prophase to early anaphase, by DAPK3 and PKN1. Phosphorylation at Thr-12 (H3T11ph) by PKN1 or isoform M2 of PKM (PKM2) is a specific tag for epigenetic transcriptional activation that promotes demethylation of Lys-10 (H3K9me) by KDM4C/JMJD2C. Phosphorylation at Tyr-42 (H3Y41ph) by JAK2 promotes exclusion of CBX5 (HP1 alpha) from chromatin. Ubiquitinated. In terms of processing, lysine deamination at Lys-5 (H3K4all) to form allysine is mediated by LOXL2. Allysine formation by LOXL2 only takes place on H3K4me3 and results in gene repression. Post-translationally, butyrylation of histones marks active promoters and competes with histone acetylation. It is present during late spermatogenesis. Succinylation at Lys-80 (H3K79succ) by KAT2A takes place with a maximum frequency around the transcription start sites of genes. It gives a specific tag for epigenetic transcription activation. Desuccinylation at Lys-123 (H3K122succ) by SIRT7 in response to DNA damage promotes chromatin condensation and double-strand breaks (DSBs) repair. In terms of processing, serine ADP-ribosylation constitutes the primary form of ADP-ribosylation of proteins in response to DNA damage. Serine ADP-ribosylation at Ser-11 (H3S10ADPr) is mutually exclusive with phosphorylation at Ser-11 (H3S10ph) and impairs acetylation at Lys-10 (H3K9ac).

It localises to the nucleus. Its subcellular location is the chromosome. In terms of biological role, core component of nucleosome. Nucleosomes wrap and compact DNA into chromatin, limiting DNA accessibility to the cellular machineries which require DNA as a template. Histones thereby play a central role in transcription regulation, DNA repair, DNA replication and chromosomal stability. DNA accessibility is regulated via a complex set of post-translational modifications of histones, also called histone code, and nucleosome remodeling. This is Histone H3-7 from Homo sapiens (Human).